The primary structure comprises 185 residues: Protein GrpE (185 aa).

Residues Met-1–Gln-37 are disordered. A compositionally biased stretch (polar residues) spans Glu-28–Gln-37.

The protein belongs to the GrpE family. Homodimer.

The protein localises to the cytoplasm. Participates actively in the response to hyperosmotic and heat shock by preventing the aggregation of stress-denatured proteins, in association with DnaK and GrpE. It is the nucleotide exchange factor for DnaK and may function as a thermosensor. Unfolded proteins bind initially to DnaJ; upon interaction with the DnaJ-bound protein, DnaK hydrolyzes its bound ATP, resulting in the formation of a stable complex. GrpE releases ADP from DnaK; ATP binding to DnaK triggers the release of the substrate protein, thus completing the reaction cycle. Several rounds of ATP-dependent interactions between DnaJ, DnaK and GrpE are required for fully efficient folding. The polypeptide is Protein GrpE (Helicobacter hepaticus (strain ATCC 51449 / 3B1)).